The chain runs to 123 residues: Small ribosomal subunit protein uS12 (123 aa).

Position 89 is a 3-methylthioaspartic acid (Asp-89). The interval 101–123 is disordered; sequence TLDTSGVSDRRQSRSKYGAKRPK. The span at 113–123 shows a compositional bias: basic residues; sequence SRSKYGAKRPK.

The protein belongs to the universal ribosomal protein uS12 family. Part of the 30S ribosomal subunit. Contacts proteins S8 and S17. May interact with IF1 in the 30S initiation complex.

With S4 and S5 plays an important role in translational accuracy. Its function is as follows. Interacts with and stabilizes bases of the 16S rRNA that are involved in tRNA selection in the A site and with the mRNA backbone. Located at the interface of the 30S and 50S subunits, it traverses the body of the 30S subunit contacting proteins on the other side and probably holding the rRNA structure together. The combined cluster of proteins S8, S12 and S17 appears to hold together the shoulder and platform of the 30S subunit. In Solidesulfovibrio magneticus (strain ATCC 700980 / DSM 13731 / RS-1) (Desulfovibrio magneticus), this protein is Small ribosomal subunit protein uS12.